A 157-amino-acid polypeptide reads, in one-letter code: Transcriptional repressor NrdR (157 aa).

The disordered stretch occupies residues 1–26; that stretch reads MRCPKCGGSKSSVIDSRQAEDGNTIR. A zinc finger lies at 3–34; it reads CPKCGGSKSSVIDSRQAEDGNTIRRRRECEDC. A compositionally biased stretch (basic and acidic residues) spans 17-26; that stretch reads RQAEDGNTIR. In terms of domain architecture, ATP-cone spans 49 to 139; the sequence is LVVVKKDGTR…VYRSFKDVGE (91 aa).

It belongs to the NrdR family. Requires Zn(2+) as cofactor.

Functionally, negatively regulates transcription of bacterial ribonucleotide reductase nrd genes and operons by binding to NrdR-boxes. This Streptococcus gordonii (strain Challis / ATCC 35105 / BCRC 15272 / CH1 / DL1 / V288) protein is Transcriptional repressor NrdR.